The primary structure comprises 365 residues: Serine protease 40 (365 aa).

The N-terminal stretch at 1–34 (MCGIRAKKSGLGGYGAGLLAALLGVSFLSQHAQT) is a signal peptide. N-linked (GlcNAc...) asparagine glycosylation occurs at asparagine 44. In terms of domain architecture, Peptidase S1 spans 69–313 (IYGGQIAGAE…FDKWIKDNKK (245 aa)). Cysteines 94 and 110 form a disulfide. Catalysis depends on charge relay system residues histidine 109 and aspartate 159. 3 disulfide bridges follow: cysteine 193/cysteine 270, cysteine 226/cysteine 249, and cysteine 260/cysteine 288. Serine 264 (charge relay system) is an active-site residue. Positions 312 to 343 (KKSSSNSKPGESPHHPGSPENENPEGDNKNQG) are disordered.

The protein belongs to the peptidase S1 family. Expressed in testis. More specifically, abundantly expressed in the haploid round spermatid.

It localises to the cytoplasmic vesicle. It is found in the secretory vesicle. The protein resides in the acrosome. The protein localises to the secreted. Its function is as follows. May play an important role in the sperm/egg interaction; released during the acrosome reaction. This is Serine protease 40 (Prss40) from Mus musculus (Mouse).